Reading from the N-terminus, the 402-residue chain is Digeranylgeranylglycerophospholipid reductase (402 aa).

FAD contacts are provided by Gly15, Glu34, Cys45, Ala46, Gly48, Arg99, Ala123, Asp280, Gly292, and Ile293.

Belongs to the geranylgeranyl reductase family. DGGGPL reductase subfamily. FAD serves as cofactor.

It carries out the reaction a 2,3-bis-O-phytanyl-sn-glycerol 1-phospholipid + 8 oxidized 2[4Fe-4S]-[ferredoxin] = a 2,3-bis-O-(geranylgeranyl)-sn-glycerol 1-phospholipid + 8 reduced 2[4Fe-4S]-[ferredoxin] + 16 H(+). It catalyses the reaction 2,3-bis-O-(phytanyl)-sn-glycerol 1-phosphate + 8 oxidized 2[4Fe-4S]-[ferredoxin] = 2,3-bis-O-(geranylgeranyl)-sn-glycerol 1-phosphate + 8 reduced 2[4Fe-4S]-[ferredoxin] + 16 H(+). The enzyme catalyses a 2,3-bis-O-phytanyl-sn-glycerol 1-phospholipid + 8 A = a 2,3-bis-O-(geranylgeranyl)-sn-glycerol 1-phospholipid + 8 AH2. The catalysed reaction is CDP-2,3-bis-O-(geranylgeranyl)-sn-glycerol + 8 AH2 = CDP-2,3-bis-O-(phytanyl)-sn-glycerol + 8 A. It carries out the reaction archaetidylserine + 8 AH2 = 2,3-bis-O-phytanyl-sn-glycero-3-phospho-L-serine + 8 A. The protein operates within membrane lipid metabolism; glycerophospholipid metabolism. Functionally, is involved in the reduction of 2,3-digeranylgeranylglycerophospholipids (unsaturated archaeols) into 2,3-diphytanylglycerophospholipids (saturated archaeols) in the biosynthesis of archaeal membrane lipids. Catalyzes the formation of archaetidic acid (2,3-di-O-phytanyl-sn-glyceryl phosphate) from 2,3-di-O-geranylgeranylglyceryl phosphate (DGGGP) via the hydrogenation of each double bond of the isoprenoid chains. Is also probably able to reduce double bonds of geranyl groups in CDP-2,3-bis-O-(geranylgeranyl)-sn-glycerol and archaetidylserine, thus acting at various stages in the biosynthesis of archaeal membrane lipids. In Methanospirillum hungatei JF-1 (strain ATCC 27890 / DSM 864 / NBRC 100397 / JF-1), this protein is Digeranylgeranylglycerophospholipid reductase.